Here is a 184-residue protein sequence, read N- to C-terminus: Thymidine kinase (184 aa).

Residues glycine 15–serine 22 and aspartate 89–glutamine 92 each bind ATP. Glutamate 90 functions as the Proton acceptor in the catalytic mechanism. Zn(2+)-binding residues include cysteine 146, cysteine 149, cysteine 178, and cysteine 181.

It belongs to the thymidine kinase family. In terms of assembly, homotetramer.

The protein localises to the cytoplasm. It carries out the reaction thymidine + ATP = dTMP + ADP + H(+). The chain is Thymidine kinase from Mesomycoplasma hyopneumoniae (strain 232) (Mycoplasma hyopneumoniae).